Consider the following 183-residue polypeptide: MGNGINKVLPDLYLGNFKDARDREQLARNNITHILSIHDTAAPILQEMTYLCIAAADSPTQNLIQHFRQSIAFIHQSRLKGEGCLVHCLAGVSRSVTLVVAYIMTVTTLGWQEALAAVKIARPCASPNTGFQNQLQEFQTGELQQFREWLKEEYKENPFNDEEDIRNLLTKASTEEDAELQNN.

Positions 4–144 (GINKVLPDLY…LQEFQTGELQ (141 aa)) constitute a Tyrosine-protein phosphatase domain. The active-site Phosphocysteine intermediate is the Cys-88.

It belongs to the protein-tyrosine phosphatase family. Non-receptor class dual specificity subfamily.

It localises to the cytoplasm. Its subcellular location is the nucleus. The enzyme catalyses O-phospho-L-tyrosyl-[protein] + H2O = L-tyrosyl-[protein] + phosphate. It catalyses the reaction O-phospho-L-seryl-[protein] + H2O = L-seryl-[protein] + phosphate. The catalysed reaction is O-phospho-L-threonyl-[protein] + H2O = L-threonyl-[protein] + phosphate. Its function is as follows. Activates the Jnk signaling pathway. Dephosphorylates and deactivates p38 and stress-activated protein kinase/c-Jun N-terminal kinase (SAPK/JNK). The chain is Dual specificity protein phosphatase 22-B (dusp22b) from Danio rerio (Zebrafish).